Reading from the N-terminus, the 322-residue chain is MNSLGINIYEILFQILHITLIIIFIIFFAATLSILERKFLAFFQNRHGPNRVGWFGSLQLCADMIKILFKEDWVPQFSKKSIFILSPIIAFVSLLLVIPTIPFTPNFLIINLNIGILFFLMMASLSVYAVLFAGWSSNNKYSLLGAIRASAQTLSYEVFLGLSLMGVIARSGSFNIVDIVNSQKEVWNVIPQFFGFLCFFIAGIALCHRHPFDQPESEQELADGYHIEYSGMKFGLFFIGEYISIITVSALISTVFFGGYFGFWGSSFFWLFLKTVFFILIFILIRASLPRPKYDQIMSFGWKICLPLTLLNLIITAFFILI.

8 helical membrane passes run 15–35 (ILHI…LSIL), 82–102 (IFIL…PTIP), 114–134 (IGIL…LFAG), 149–169 (ASAQ…GVIA), 186–206 (VWNV…GIAL), 243–263 (ISII…YFGF), 265–285 (GSSF…FILI), and 302–322 (WKIC…FILI).

It belongs to the complex I subunit 1 family. In terms of assembly, NDH-1 is composed of 13 different subunits. Subunits NuoA, H, J, K, L, M, N constitute the membrane sector of the complex.

The protein localises to the cell membrane. The enzyme catalyses a quinone + NADH + 5 H(+)(in) = a quinol + NAD(+) + 4 H(+)(out). Its function is as follows. NDH-1 shuttles electrons from NADH, via FMN and iron-sulfur (Fe-S) centers, to quinones in the respiratory chain. The immediate electron acceptor for the enzyme in this species is believed to be ubiquinone. Couples the redox reaction to proton translocation (for every two electrons transferred, four hydrogen ions are translocated across the cytoplasmic membrane), and thus conserves the redox energy in a proton gradient. This subunit may bind ubiquinone. The polypeptide is NADH-quinone oxidoreductase subunit H (Buchnera aphidicola subsp. Schizaphis graminum (strain Sg)).